Consider the following 388-residue polypeptide: Dual-specificity RNA methyltransferase RlmN (388 aa).

Glu-109 serves as the catalytic Proton acceptor. Positions 115–354 constitute a Radical SAM core domain; it reads EDDRATLCVS…TIVRKTRGDD (240 aa). A disulfide bridge links Cys-122 with Cys-359. The [4Fe-4S] cluster site is built by Cys-129, Cys-133, and Cys-136. Residues 183-184, Ser-215, 237-239, and Asn-316 each bind S-adenosyl-L-methionine; these read GE and SLH. Residue Cys-359 is the S-methylcysteine intermediate of the active site.

It belongs to the radical SAM superfamily. RlmN family. [4Fe-4S] cluster is required as a cofactor.

The protein localises to the cytoplasm. It carries out the reaction adenosine(2503) in 23S rRNA + 2 reduced [2Fe-2S]-[ferredoxin] + 2 S-adenosyl-L-methionine = 2-methyladenosine(2503) in 23S rRNA + 5'-deoxyadenosine + L-methionine + 2 oxidized [2Fe-2S]-[ferredoxin] + S-adenosyl-L-homocysteine. It catalyses the reaction adenosine(37) in tRNA + 2 reduced [2Fe-2S]-[ferredoxin] + 2 S-adenosyl-L-methionine = 2-methyladenosine(37) in tRNA + 5'-deoxyadenosine + L-methionine + 2 oxidized [2Fe-2S]-[ferredoxin] + S-adenosyl-L-homocysteine. Specifically methylates position 2 of adenine 2503 in 23S rRNA and position 2 of adenine 37 in tRNAs. m2A2503 modification seems to play a crucial role in the proofreading step occurring at the peptidyl transferase center and thus would serve to optimize ribosomal fidelity. The sequence is that of Dual-specificity RNA methyltransferase RlmN from Salmonella arizonae (strain ATCC BAA-731 / CDC346-86 / RSK2980).